Here is a 473-residue protein sequence, read N- to C-terminus: Tryptophanase (473 aa).

Lys-270 bears the N6-(pyridoxal phosphate)lysine mark.

The protein belongs to the beta-eliminating lyase family. In terms of assembly, homotetramer. The cofactor is pyridoxal 5'-phosphate.

The enzyme catalyses L-tryptophan + H2O = indole + pyruvate + NH4(+). It functions in the pathway amino-acid degradation; L-tryptophan degradation via pyruvate pathway; indole and pyruvate from L-tryptophan: step 1/1. The chain is Tryptophanase from Vibrio vulnificus (strain CMCP6).